A 265-amino-acid polypeptide reads, in one-letter code: MKKEVCSVAFFKAVFAEFLATLIFVFFGLGSALKWPSALPTILQISIAFGLAIGTLAQALGPVSGGHINPAITLALLIGNQISLLRAIFYVAAQLVGAIAGAGILYWLAPGNARGNLAVNALSNNTTPGKAVVVELILTFQLALCIFSSTDSRRTSPVGSPALSIGLSVTLGHLVGIYFTGCSMNPARSFGPAVVMNRFSPSHWVFWVGPIVGAVLAAILYFYLLFPSSLSLHDRVAVVKGTYEPEEDWEDHREERKKTIELTAH.

Over methionine 1–lysine 12 the chain is Cytoplasmic. A helical membrane pass occupies residues alanine 13 to leucine 33. Topologically, residues lysine 34–leucine 39 are extracellular. The chain crosses the membrane as a helical span at residues proline 40 to leucine 60. At glycine 61 to glycine 65 the chain is on the cytoplasmic side. Residues glycine 66–leucine 74 constitute an intramembrane region (discontinuously helical). An NPA 1 motif is present at residues asparagine 69–alanine 71. Over alanine 75–alanine 87 the chain is Cytoplasmic. A helical transmembrane segment spans residues isoleucine 88–leucine 108. The Extracellular segment spans residues alanine 109–threonine 126. A glycan (N-linked (GlcNAc...) asparagine) is linked at asparagine 124. The helical transmembrane segment at threonine 127–phenylalanine 147 threads the bilayer. The Cytoplasmic segment spans residues serine 148–valine 158. Residues glycine 159–phenylalanine 179 traverse the membrane as a helical segment. A topological domain (extracellular) is located at residue threonine 180. The discontinuously helical intramembrane region spans glycine 181–glycine 191. The NPA 2 signature appears at asparagine 185–alanine 187. The Extracellular portion of the chain corresponds to proline 192–histidine 203. Residues tryptophan 204–leucine 224 form a helical membrane-spanning segment. Residues leucine 225–histidine 265 lie on the Cytoplasmic side of the membrane.

This sequence belongs to the MIP/aquaporin (TC 1.A.8) family. As to quaternary structure, homotetramer; each monomer provides an independent water pore. Interacts with TRPV4; the interaction is probably indirect and regulates TRPV4 activation by hypotonicity. Detected at the luminal membrane of secretory epithelial cells in hindpaw sweat glands. Detected in acinar cells in salivary glands, in duct cells in lacrimal glands and in lung (at protein level). Detected in lung, parotid, submandibular, sublingual, and lacrimal gland tissues.

It is found in the apical cell membrane. The protein resides in the cell membrane. Its subcellular location is the cytoplasmic vesicle membrane. The catalysed reaction is H2O(in) = H2O(out). Its function is as follows. Aquaporins form homotetrameric transmembrane channels, with each monomer independently mediating water transport across the plasma membrane along its osmotic gradient. Plays an important role in fluid secretion in salivary glands. Required for TRPV4 activation by hypotonicity. Together with TRPV4, controls regulatory volume decrease in salivary epithelial cells. Seems to play a redundant role in water transport in the eye, lung and in sweat glands. This is Aquaporin-5 from Mus musculus (Mouse).